A 320-amino-acid polypeptide reads, in one-letter code: Cytochrome f (320 aa).

The signal sequence occupies residues M1 to A35. Positions 36, 56, 59, and 60 each coordinate heme. A helical transmembrane segment spans residues I286–L305.

It belongs to the cytochrome f family. As to quaternary structure, the 4 large subunits of the cytochrome b6-f complex are cytochrome b6, subunit IV (17 kDa polypeptide, petD), cytochrome f and the Rieske protein, while the 4 small subunits are PetG, PetL, PetM and PetN. The complex functions as a dimer. It depends on heme as a cofactor.

It localises to the plastid. It is found in the chloroplast thylakoid membrane. Its function is as follows. Component of the cytochrome b6-f complex, which mediates electron transfer between photosystem II (PSII) and photosystem I (PSI), cyclic electron flow around PSI, and state transitions. The chain is Cytochrome f (petA) from Spinacia oleracea (Spinach).